A 27-amino-acid polypeptide reads, in one-letter code: Cysteine-rich venom protein tropirin (27 aa).

It belongs to the CRISP family. Contains 8 disulfide bonds. In terms of tissue distribution, expressed by the venom gland.

It is found in the secreted. In terms of biological role, blocks contraction of smooth muscle elicited by high potassium-induced depolarization, but does not block caffeine-stimulated contraction. May target voltage-gated calcium channels on smooth muscle. The protein is Cysteine-rich venom protein tropirin of Tropidechis carinatus (Australian rough-scaled snake).